Here is a 76-residue protein sequence, read N- to C-terminus: uncharacterized protein (76 aa).

This sequence to K.pneumoniae LtrA, E.coli YjiE, and YhcS.

This is an uncharacterized protein from Escherichia coli O6:H1 (strain CFT073 / ATCC 700928 / UPEC).